Here is a 455-residue protein sequence, read N- to C-terminus: Kynurenine 3-monooxygenase (455 aa).

The protein belongs to the aromatic-ring hydroxylase family. KMO subfamily. It depends on FAD as a cofactor.

It catalyses the reaction L-kynurenine + NADPH + O2 + H(+) = 3-hydroxy-L-kynurenine + NADP(+) + H2O. It participates in cofactor biosynthesis; NAD(+) biosynthesis; quinolinate from L-kynurenine: step 1/3. In terms of biological role, catalyzes the hydroxylation of L-kynurenine (L-Kyn) to form 3-hydroxy-L-kynurenine (L-3OHKyn). Required for synthesis of quinolinic acid. The protein is Kynurenine 3-monooxygenase of Xanthomonas oryzae pv. oryzae (strain MAFF 311018).